Reading from the N-terminus, the 88-residue chain is Small ribosomal subunit protein bS16 (88 aa).

Belongs to the bacterial ribosomal protein bS16 family.

The sequence is that of Small ribosomal subunit protein bS16 from Geotalea uraniireducens (strain Rf4) (Geobacter uraniireducens).